The following is a 303-amino-acid chain: Acetylglutamate kinase (303 aa).

Residues 73 to 74, Arg95, and Asn194 each bind substrate; that span reads GG.

This sequence belongs to the acetylglutamate kinase family. ArgB subfamily.

It localises to the cytoplasm. It carries out the reaction N-acetyl-L-glutamate + ATP = N-acetyl-L-glutamyl 5-phosphate + ADP. It participates in amino-acid biosynthesis; L-arginine biosynthesis; N(2)-acetyl-L-ornithine from L-glutamate: step 2/4. In terms of biological role, catalyzes the ATP-dependent phosphorylation of N-acetyl-L-glutamate. This is Acetylglutamate kinase from Saccharopolyspora erythraea (strain ATCC 11635 / DSM 40517 / JCM 4748 / NBRC 13426 / NCIMB 8594 / NRRL 2338).